An 836-amino-acid polypeptide reads, in one-letter code: Periostin (836 aa).

An N-terminal signal peptide occupies residues 1 to 21 (MIPFLPMFSLLLLLIVNPINA). The EMI domain occupies 40-94 (GPNVCALQQILGTKKKYFSTCKNWYKKSICGQKTTVLYECCPGYMRMEGMKGCPA). 5 disulfide bridges follow: Cys44–Cys80, Cys69–Cys333, Cys79–Cys92, Cys208–Cys311, and Cys467–Cys472. An S-cysteinyl cysteine modification is found at Cys60. FAS1 domains lie at 97-230 (PIDH…DRVL), 234-365 (GTSI…DQVL), 368-492 (DSAK…REII), and 496-628 (EKSL…DKLL). N-linked (GlcNAc...) asparagine glycosylation is present at Asn599.

Homodimer. Interacts with BMP1 and fibronectin. In terms of processing, gamma-carboxylation is controversial. Gamma-carboxyglutamated; gamma-carboxyglutamate residues are formed by vitamin K dependent carboxylation; this may be required for calcium binding. According to a more recent report, does not contain vitamin K-dependent gamma-carboxyglutamate residues. As to expression, widely expressed with highest levels in aorta, stomach, lower gastrointestinal tract, placenta, uterus, thyroid tissue and breast. Expressed in the kidney. Expressed in the lung. Up-regulated in epithelial ovarian tumors. Not expressed in normal ovaries. Also highly expressed at the tumor periphery of lung carcinoma tissue but not within the tumor. Overexpressed in breast cancers.

Its subcellular location is the golgi apparatus. It localises to the secreted. The protein localises to the extracellular space. It is found in the extracellular matrix. Functionally, induces cell attachment and spreading and plays a role in cell adhesion. Enhances incorporation of BMP1 in the fibronectin matrix of connective tissues, and subsequent proteolytic activation of lysyl oxidase LOX. The polypeptide is Periostin (POSTN) (Homo sapiens (Human)).